Here is a 452-residue protein sequence, read N- to C-terminus: Nebulette (452 aa).

The interval 1-26 (MKVPVSGDVKEETEEENVEQEENQEA) is disordered. Residues 11-23 (EETEEENVEQEEN) are compositionally biased toward acidic residues. 12 Nebulin repeats span residues 29–63 (SLKP…KSKD), 64–98 (KCTF…ADLS), 101–135 (LYKD…AEKG), 138–172 (DYTH…GTHT), 173–199 (YTAE…EYKK), 206–240 (KEPS…NEMK), 263–278 (LASD…ENKG), 279–313 (LYHF…KNKG), 315–349 (SMLE…KEIK), 352–386 (SSLD…NEIK), 389–423 (GMEL…TEIK), and 426–452 (GMQV…VRMV).

Interacts (via nebulin repeats 1-5) with DESM (via rod region). Interacts (via SH3 domain) with XIRP2.

The protein resides in the cytoplasm. Its function is as follows. Binds to actin and plays an important role in the assembly of the Z-disk. May functionally link sarcomeric actin to the desmin intermediate filaments in the heart muscle sarcomeres. Isoform 2 might play a role in the assembly of focal adhesion. This is Nebulette (Nebl) from Mus musculus (Mouse).